The sequence spans 45 residues: Mu-conotoxin-like Cal 12.1.2a (45 aa).

4 disulfides stabilise this stretch: Cys3–Cys16, Cys11–Cys28, Cys18–Cys33, and Cys27–Cys39. A 4-hydroxyproline modification is found at Pro23. Residues Trp37 and Trp38 each carry the 6'-bromotryptophan modification. Residue Pro40 is modified to 4-hydroxyproline. Trp44 is modified (6'-bromotryptophan).

Expressed by the venom duct.

Its subcellular location is the secreted. In terms of biological role, mu-conotoxins block voltage-gated sodium channels. This toxin reversibly blocks voltage-gated sodium channel in cephalopods, with no alteration in the voltage dependence of sodium conductance or on the kinetics of inactivation. The protein is Mu-conotoxin-like Cal 12.1.2a of Californiconus californicus (California cone).